A 185-amino-acid polypeptide reads, in one-letter code: Ribosome-recycling factor (185 aa).

The protein belongs to the RRF family.

It is found in the cytoplasm. Its function is as follows. Responsible for the release of ribosomes from messenger RNA at the termination of protein biosynthesis. May increase the efficiency of translation by recycling ribosomes from one round of translation to another. The chain is Ribosome-recycling factor from Pseudarthrobacter chlorophenolicus (strain ATCC 700700 / DSM 12829 / CIP 107037 / JCM 12360 / KCTC 9906 / NCIMB 13794 / A6) (Arthrobacter chlorophenolicus).